The sequence spans 309 residues: Porphobilinogen deaminase (309 aa).

An S-(dipyrrolylmethanemethyl)cysteine modification is found at cysteine 242.

The protein belongs to the HMBS family. In terms of assembly, monomer. It depends on dipyrromethane as a cofactor.

It catalyses the reaction 4 porphobilinogen + H2O = hydroxymethylbilane + 4 NH4(+). It functions in the pathway porphyrin-containing compound metabolism; protoporphyrin-IX biosynthesis; coproporphyrinogen-III from 5-aminolevulinate: step 2/4. Its function is as follows. Tetrapolymerization of the monopyrrole PBG into the hydroxymethylbilane pre-uroporphyrinogen in several discrete steps. The protein is Porphobilinogen deaminase of Syntrophobacter fumaroxidans (strain DSM 10017 / MPOB).